Consider the following 523-residue polypeptide: Cytidine and dCMP deaminase domain-containing protein 1 (523 aa).

Over residues 1 to 11 (MKETDQMQSLE) the composition is skewed to polar residues. 2 disordered regions span residues 1–27 (MKET…GSMT) and 55–81 (QGQK…RVST). One can recognise a CMP/dCMP-type deaminase 1 domain in the interval 71 to 169 (GDNEELTRVS…SLLTEASSSE (99 aa)). 3 residues coordinate Zn(2+): His110, Cys135, and Cys138. A Nuclear export signal motif is present at residues 272–284 (NLRQNMKDLILLL). The region spanning 318 to 483 (EVARHCMVQA…LNPSEAYSLD (166 aa)) is the CMP/dCMP-type deaminase 2 domain. His399 is a Zn(2+) binding site. Glu401 serves as the catalytic Proton donor. Zn(2+)-binding residues include Cys427 and Cys430. The interval 478-523 (EAYSLDPNEPERRENGVLRRRSAKDEQRSSKRPRLETRSAGRATLQ) is disordered. Basic and acidic residues predominate over residues 486–516 (EPERRENGVLRRRSAKDEQRSSKRPRLETRS). The Bipartite nuclear localization signal signature appears at 489–511 (RRENGVLRRRSAKDEQRSSKRPR).

Belongs to the cytidine and deoxycytidylate deaminase family. Requires Zn(2+) as cofactor.

The protein localises to the cytoplasm. The protein resides in the nucleus. The catalysed reaction is 2'-deoxycytidine + H2O + H(+) = 2'-deoxyuridine + NH4(+). It catalyses the reaction cytidine + H2O + H(+) = uridine + NH4(+). Its function is as follows. Catalyzes the deamination of cytidine and deoxycytidine into uridine and deoxyuridine, respectively. May play an important role in testicular development and spermatogenesis. The protein is Cytidine and dCMP deaminase domain-containing protein 1 (Cdadc1) of Mus musculus (Mouse).